A 341-amino-acid polypeptide reads, in one-letter code: UDP-3-O-acylglucosamine N-acyltransferase (341 aa).

The active-site Proton acceptor is the histidine 241.

The protein belongs to the transferase hexapeptide repeat family. LpxD subfamily. Homotrimer.

The catalysed reaction is a UDP-3-O-[(3R)-3-hydroxyacyl]-alpha-D-glucosamine + a (3R)-hydroxyacyl-[ACP] = a UDP-2-N,3-O-bis[(3R)-3-hydroxyacyl]-alpha-D-glucosamine + holo-[ACP] + H(+). It participates in bacterial outer membrane biogenesis; LPS lipid A biosynthesis. Catalyzes the N-acylation of UDP-3-O-acylglucosamine using 3-hydroxyacyl-ACP as the acyl donor. Is involved in the biosynthesis of lipid A, a phosphorylated glycolipid that anchors the lipopolysaccharide to the outer membrane of the cell. The sequence is that of UDP-3-O-acylglucosamine N-acyltransferase from Christiangramia forsetii (strain DSM 17595 / CGMCC 1.15422 / KT0803) (Gramella forsetii).